The sequence spans 794 residues: Signal transducer and activator of transcription 5A (794 aa).

A Phosphotyrosine modification is found at Tyr90. Ser128 carries the post-translational modification Phosphoserine. One can recognise an SH2 domain in the interval 589-686 (WNDGAILGFV…EVFSKYYTPV (98 aa)). Tyr682 bears the Phosphotyrosine mark. Residue Tyr694 is modified to Phosphotyrosine; by JAK2. The disordered stretch occupies residues 771–794 (PMDSLEPSLPPPTGLFTPGRGSLS).

Belongs to the transcription factor STAT family. Forms a homodimer or a heterodimer with a related family member. Binds NR3C1. Interacts with NCOA1 and SOCS7. Interacts with ERBB4. Interacts with EBF4. Interacts with CD69. ISGylated. Post-translationally, tyrosine phosphorylated in response to KITLG/SCF, IL2, IL3, IL7, IL15, CSF2/GMCSF, GH1, PRL, EPO and THPO. Activated KIT promotes phosphorylation on tyrosine residues and subsequent translocation to the nucleus. Tyrosine phosphorylated in response to constitutively activated FGFR1, FGFR2, FGFR3 and FGFR4. Tyrosine phosphorylation is required for DNA-binding activity and dimerization. Serine phosphorylation is also required for maximal transcriptional activity. Tyrosine phosphorylated in response to signaling via activated FLT3; wild-type FLT3 results in much weaker phosphorylation than constitutively activated mutant FLT3. Alternatively, can be phosphorylated by JAK2 at Tyr-694.

It is found in the cytoplasm. Its subcellular location is the nucleus. Its function is as follows. Carries out a dual function: signal transduction and activation of transcription. Mediates cellular responses to the cytokine KITLG/SCF and other growth factors. May mediate cellular responses to activated FGFR1, FGFR2, FGFR3 and FGFR4. Binds to the GAS element and activates PRL-induced transcription. Regulates the expression of milk proteins during lactation. In Bos taurus (Bovine), this protein is Signal transducer and activator of transcription 5A (STAT5A).